A 390-amino-acid chain; its full sequence is MSLSERQREEINRAVAEYLQNNGYSEAFNMLLKEASLSENDIKPLGGILEKKWTTVLRLQRKVNDLEAKLLESQQEINHGAPTRDKRQAADWIPRPPETQKLIGHRLPVTRVIFHPLWTIMASCSEDATIKVWDYETGQLEKTLKGHTDAVNDIAIDAAGKQLVSCSTDLTIKLWDFGQSYDCLKSLKGHEHTVSSVTFLPTGDFVLSASRDHTIKQWDISTGYCVFTFRGHNDWVRMIRISHDGTLFASGSLDQTVSVWSLPRKQRNWYFEIMSMRWSVSKPEGNSTHILFSGSRDRSIKAWNISTGEVIFTLSAHENWVRGLAFHPKGKYLVSVADDKMMRIWELSAQRCMKAIEAHEHFVSTVAFHQTNPYVITGSVDMSCKVWECR.

A LisH domain is found at 7–39; sequence QREEINRAVAEYLQNNGYSEAFNMLLKEASLSE. The stretch at 54-80 forms a coiled coil; the sequence is TTVLRLQRKVNDLEAKLLESQQEINHG. WD repeat units lie at residues 104–145, 146–185, 189–228, 231–270, 272–313, 316–355, and 358–390; these read GHRL…KTLK, GHTD…DCLK, GHEH…CVFT, GHND…RNWY, EIMS…VIFT, AHEN…CMKA, and AHEH…WECR.

This sequence belongs to the WD repeat LIS1/nudF family.

It localises to the cytoplasm. The protein resides in the cytoskeleton. Its subcellular location is the microtubule organizing center. The protein localises to the centrosome. Its function is as follows. Positively regulates the activity of the minus-end directed microtubule motor protein dynein. May enhance dynein-mediated microtubule sliding by targeting dynein to the microtubule plus end. Required for several dynein- and microtubule-dependent processes. This is Lissencephaly-1 homolog from Caenorhabditis briggsae.